A 20-amino-acid polypeptide reads, in one-letter code: Hemocyanin subunit II (20 aa).

The interval Asp1–Lys20 is disordered. A compositionally biased stretch (basic and acidic residues) spans Lys10–Lys20.

This sequence belongs to the tyrosinase family. Hemocyanin subfamily. Composed of 3 major subunits (IB, II and III) and 1 minor subunit (IA) which form homohexamers and heterohexamers. May also form larger structures. In terms of tissue distribution, hemolymph.

It is found in the secreted. The protein localises to the extracellular space. Its function is as follows. Hemocyanins are copper-containing oxygen carriers occurring freely dissolved in the hemolymph of many mollusks and arthropods. This is Hemocyanin subunit II from Panulirus japonicus (Japanese spiny lobster).